The sequence spans 121 residues: Large ribosomal subunit protein eL18 (121 aa).

This sequence belongs to the eukaryotic ribosomal protein eL18 family.

This is Large ribosomal subunit protein eL18 from Methanospirillum hungatei JF-1 (strain ATCC 27890 / DSM 864 / NBRC 100397 / JF-1).